Consider the following 504-residue polypeptide: Dihydrolipoamide dehydrogenase (504 aa).

The transit peptide at 1 to 34 directs the protein to the mitochondrion; sequence MLSQRLIGRTAVKSAFRPSGLPTVVNASRWRRGY. FAD is bound by residues 69 to 78, Lys87, Gly151, and 180 to 182; these read EKRGTLGGTC and TGS. A disulfide bridge links Cys78 with Cys83. Residues 217-224, Glu240, Val275, and Gly310 each bind NAD(+); that span reads GGGIIGLE. FAD contacts are provided by residues Asp351 and 357 to 360; that span reads MLAH. His483 acts as the Proton acceptor in catalysis.

Belongs to the class-I pyridine nucleotide-disulfide oxidoreductase family. In terms of assembly, eukaryotic pyruvate dehydrogenase (PDH) complexes are organized as a core consisting of the oligomeric dihydrolipoamide acetyl-transferase (E2), around which are arranged multiple copies of pyruvate dehydrogenase (E1), dihydrolipoamide dehydrogenase (E3) and protein X (E3BP) bound by non-covalent bonds. The Chaetomium thermophilum PDH complex contains 60 E2 units, 12 E3BP units, about 20 E1 units, and 12 or more E3 units. The units are organized in 1 E2 60-mer, 4 E3BP trimers, about 20 E1 tetramers, and a maximum of 12 E3 dimers. The E3BP trimers are bound inside the icosahedral core with tetrahedral symmetry. The cofactor is FAD.

It localises to the mitochondrion. The enzyme catalyses N(6)-[(R)-dihydrolipoyl]-L-lysyl-[protein] + NAD(+) = N(6)-[(R)-lipoyl]-L-lysyl-[protein] + NADH + H(+). In terms of biological role, lipoamide dehydrogenase is a component of the alpha-ketoacid dehydrogenase complexes. This includes the pyruvate dehydrogenase complex, which catalyzes the overall conversion of pyruvate to acetyl-CoA and CO(2). Also acts as a component of the glycine cleavage system (glycine decarboxylase complex), which catalyzes the degradation of glycine. The 10-megadalton pyruvate dehydrogenase complex contains multiple copies of three enzymatic components: pyruvate dehydrogenase (E1), dihydrolipoamide acetyltransferase (E2) and lipoamide dehydrogenase (E3) and catalyzes the overall oxidative decarboxylation of pyruvate to form acetyl-CoA and CO(2). Within the complex, pyruvate and thiamine pyrophosphate (TPP or vitamin B1) are bound by pyruvate dehydrogenase E1 subunits alpha and beta and pyruvate is decarboxylated leading to the 2-carbon hydrohyethyl bound to TPP. The E2 component contains covalently-bound lipoyl cofactors and transfers the hydroxyethyl group from TPP to an oxidized form of covalently bound lipoamide, and the resulting acetyl group is then transferred to free coenzyme A to form acetyl-CoA and reduced dihydrolipoamide-E2. Finally, the flavoprotein dihydrolipoamide dehydrogenase (E3) re-oxidizes the lipoyl group of dihydrolipoamide-E2 to form lipoamide-E2 and NADH. A fourth subunit, E3BP, is responsible for tethering E3 in proximity to the core, forming the entire metabolon. The sequence is that of Dihydrolipoamide dehydrogenase from Chaetomium thermophilum (strain DSM 1495 / CBS 144.50 / IMI 039719) (Thermochaetoides thermophila).